Reading from the N-terminus, the 193-residue chain is NADH-quinone oxidoreductase subunit B (193 aa).

Residues C49, C50, C115, and C144 each contribute to the [4Fe-4S] cluster site. The segment at 172-193 (FKKEEPREANAPVPVNTEMPLE) is disordered.

Belongs to the complex I 20 kDa subunit family. In terms of assembly, NDH-1 is composed of 14 different subunits. Subunits NuoB, C, D, E, F, and G constitute the peripheral sector of the complex. Requires [4Fe-4S] cluster as cofactor.

The protein resides in the cell inner membrane. The catalysed reaction is a quinone + NADH + 5 H(+)(in) = a quinol + NAD(+) + 4 H(+)(out). Its function is as follows. NDH-1 shuttles electrons from NADH, via FMN and iron-sulfur (Fe-S) centers, to quinones in the respiratory chain. The immediate electron acceptor for the enzyme in this species is believed to be ubiquinone. Couples the redox reaction to proton translocation (for every two electrons transferred, four hydrogen ions are translocated across the cytoplasmic membrane), and thus conserves the redox energy in a proton gradient. The chain is NADH-quinone oxidoreductase subunit B from Akkermansia muciniphila (strain ATCC BAA-835 / DSM 22959 / JCM 33894 / BCRC 81048 / CCUG 64013 / CIP 107961 / Muc).